Consider the following 205-residue polypeptide: Octanoyltransferase (205 aa).

The region spanning 30 to 205 (ERTADEIWLL…QALRARLGYA (176 aa)) is the BPL/LPL catalytic domain. Residues 69–76 (RGGQVTYH), 136–138 (SLG), and 149–151 (GLA) contribute to the substrate site. The Acyl-thioester intermediate role is filled by Cys167.

This sequence belongs to the LipB family.

The protein resides in the cytoplasm. It catalyses the reaction octanoyl-[ACP] + L-lysyl-[protein] = N(6)-octanoyl-L-lysyl-[protein] + holo-[ACP] + H(+). It participates in protein modification; protein lipoylation via endogenous pathway; protein N(6)-(lipoyl)lysine from octanoyl-[acyl-carrier-protein]: step 1/2. Catalyzes the transfer of endogenously produced octanoic acid from octanoyl-acyl-carrier-protein onto the lipoyl domains of lipoate-dependent enzymes. Lipoyl-ACP can also act as a substrate although octanoyl-ACP is likely to be the physiological substrate. The protein is Octanoyltransferase of Ectopseudomonas mendocina (strain ymp) (Pseudomonas mendocina).